The primary structure comprises 162 residues: Flagellar assembly factor FliW (162 aa).

The protein belongs to the FliW family. Interacts with translational regulator CsrA and flagellin(s).

Its subcellular location is the cytoplasm. In terms of biological role, acts as an anti-CsrA protein, binds CsrA and prevents it from repressing translation of its target genes, one of which is flagellin. Binds to flagellin and participates in the assembly of the flagellum. This chain is Flagellar assembly factor FliW, found in Magnetococcus marinus (strain ATCC BAA-1437 / JCM 17883 / MC-1).